A 463-amino-acid polypeptide reads, in one-letter code: Immune-associated nucleotide-binding protein 10 (463 aa).

The region spanning 3–211 is the AIG1-type G domain; sequence EPIKNIVLVG…YTYQLHRKIK (209 aa). Positions 12–19 are G1; it reads GRTGNGKS. GTP is bound by residues 12 to 20 and S33; that span reads GRTGNGKSS. The interval 39 to 43 is G2; sequence GVTMI. The interval 61–64 is G3; it reads DTPG. Positions 131 to 134 are G4; it reads TGGD. The G5 stretch occupies residues 170–172; the sequence is DNK. N171 contributes to the GTP binding site. Positions 173–308 form a coiled coil; it reads SKDEKKKVEQ…KQLIAQANRM (136 aa).

Belongs to the TRAFAC class TrmE-Era-EngA-EngB-Septin-like GTPase superfamily. AIG1/Toc34/Toc159-like paraseptin GTPase family. IAN subfamily. Expressed in radicles of the germinating seeds.

The sequence is that of Immune-associated nucleotide-binding protein 10 from Arabidopsis thaliana (Mouse-ear cress).